A 940-amino-acid polypeptide reads, in one-letter code: Phosphoenolpyruvate carboxylase (940 aa).

Catalysis depends on residues histidine 138 and lysine 603.

It belongs to the PEPCase type 1 family. Requires Mg(2+) as cofactor.

It catalyses the reaction oxaloacetate + phosphate = phosphoenolpyruvate + hydrogencarbonate. Forms oxaloacetate, a four-carbon dicarboxylic acid source for the tricarboxylic acid cycle. This Streptococcus thermophilus (strain ATCC BAA-250 / LMG 18311) protein is Phosphoenolpyruvate carboxylase.